A 96-amino-acid chain; its full sequence is Aspartyl/glutamyl-tRNA(Asn/Gln) amidotransferase subunit C (96 aa).

The protein belongs to the GatC family. Heterotrimer of A, B and C subunits.

The catalysed reaction is L-glutamyl-tRNA(Gln) + L-glutamine + ATP + H2O = L-glutaminyl-tRNA(Gln) + L-glutamate + ADP + phosphate + H(+). It catalyses the reaction L-aspartyl-tRNA(Asn) + L-glutamine + ATP + H2O = L-asparaginyl-tRNA(Asn) + L-glutamate + ADP + phosphate + 2 H(+). Its function is as follows. Allows the formation of correctly charged Asn-tRNA(Asn) or Gln-tRNA(Gln) through the transamidation of misacylated Asp-tRNA(Asn) or Glu-tRNA(Gln) in organisms which lack either or both of asparaginyl-tRNA or glutaminyl-tRNA synthetases. The reaction takes place in the presence of glutamine and ATP through an activated phospho-Asp-tRNA(Asn) or phospho-Glu-tRNA(Gln). The protein is Aspartyl/glutamyl-tRNA(Asn/Gln) amidotransferase subunit C of Leptospira borgpetersenii serovar Hardjo-bovis (strain JB197).